We begin with the raw amino-acid sequence, 416 residues long: MLYNLSKAVLALSVLAASADAAGIRLEKRASTFDYETEMVRGVCLGGWLVLEPWLSPGLFDAAPDGAVDEWTYTEILGQDEAKARLIGHWDTFITEQDFFDIAAAGMNHVRIPIGYWAVEALPGDPYVDGQLEYLDRAIEWAGAAGLKVIVDLHGAPGSQNGFDNSGRKGAIQWGQGDTLGQTVNAFRKLAERYVPSSDVVTAIEAVNEPFIPGGVNEDQLKEYYQQAYDIVTQMSPDVDLVFSDGFINPTPWNGFISDSGNIVMDNHHYEVFDINLLRMSVDDHVRSVCDFGRTQLAPATKPVVVGEWTGAMTDCARYLNGRGVGARYDGAMGGESVGDCGPFIQGSVSDLSPDDQKNMRRFIEAQLDAWEMKSGWLFWNWKTEQGAPGWDMKDLLDNGVFPFPLESRKYPGQCG.

Residues 1–21 form the signal peptide; sequence MLYNLSKAVLALSVLAASADA. Glu-209 serves as the catalytic Proton donor. Intrachain disulfides connect Cys-290–Cys-415 and Cys-316–Cys-341. Residue Glu-308 is the Nucleophile of the active site.

The protein belongs to the glycosyl hydrolase 5 (cellulase A) family. Monomer. Requires Mn(2+) as cofactor.

The protein localises to the secreted. It carries out the reaction Successive hydrolysis of beta-D-glucose units from the non-reducing ends of (1-&gt;3)-beta-D-glucans, releasing alpha-glucose.. Its function is as follows. Beta-glucanases participate in the metabolism of beta-glucan, the main structural component of the cell wall. It could also function biosynthetically as a transglycosylase. The protein is Probable glucan 1,3-beta-glucosidase A (exgA) of Aspergillus terreus (strain NIH 2624 / FGSC A1156).